The primary structure comprises 578 residues: Lysine--tRNA ligase (578 aa).

Mg(2+)-binding residues include Glu414 and Glu421.

Belongs to the class-II aminoacyl-tRNA synthetase family. In terms of assembly, homodimer. The cofactor is Mg(2+).

It localises to the cytoplasm. It carries out the reaction tRNA(Lys) + L-lysine + ATP = L-lysyl-tRNA(Lys) + AMP + diphosphate. In Porphyromonas gingivalis (strain ATCC 33277 / DSM 20709 / CIP 103683 / JCM 12257 / NCTC 11834 / 2561), this protein is Lysine--tRNA ligase.